Here is a 303-residue protein sequence, read N- to C-terminus: ATP phosphoribosyltransferase (303 aa).

This sequence belongs to the ATP phosphoribosyltransferase family. Long subfamily. The cofactor is Mg(2+).

The protein localises to the cytoplasm. It carries out the reaction 1-(5-phospho-beta-D-ribosyl)-ATP + diphosphate = 5-phospho-alpha-D-ribose 1-diphosphate + ATP. Its pathway is amino-acid biosynthesis; L-histidine biosynthesis; L-histidine from 5-phospho-alpha-D-ribose 1-diphosphate: step 1/9. Its activity is regulated as follows. Feedback inhibited by histidine. In terms of biological role, catalyzes the condensation of ATP and 5-phosphoribose 1-diphosphate to form N'-(5'-phosphoribosyl)-ATP (PR-ATP). Has a crucial role in the pathway because the rate of histidine biosynthesis seems to be controlled primarily by regulation of HisG enzymatic activity. The polypeptide is ATP phosphoribosyltransferase (Stenotrophomonas maltophilia (strain R551-3)).